A 400-amino-acid polypeptide reads, in one-letter code: Large envelope protein (400 aa).

Met-1 bears the N-acetylmethionine mark. Disordered stretches follow at residues 1–50 (MGGW…PHKD) and 84–116 (ILTS…RDTH). Gly-2 carries N-myristoyl glycine; by host lipidation. The pre-S1 stretch occupies residues 2-119 (GGWSSKPRKG…PPLRDTHPQA (118 aa)). A pre-S region spans residues 2–174 (GGWSSKPRKG…LSTTGDPVPN (173 aa)). The Virion surface; in external conformation segment spans residues 2-181 (GGWSSKPRKG…VPNMENIASG (180 aa)). At 2-253 (GGWSSKPRKG…PGYRWMYLRR (252 aa)) the chain is on the intravirion; in internal conformation side. N-linked (GlcNAc...) asparagine glycosylation is present at Trp-4. The segment covering 96-106 (STNRQSGRQPT) has biased composition (polar residues). The tract at residues 120–174 (MQWNSTTFHQTLQDPRVRALYLPAGGSSSGTVSPAQNTVSAISSILSTTGDPVPN) is pre-S2. The chain crosses the membrane as a helical span at residues 182 to 202 (LLGPLLVLQAGFFSLTKILTI). Over 203–253 (PQSLDSWWTSLSFLGGTPVCLGQNSQSPISSHSPTCCPPICPGYRWMYLRR) the chain is Intravirion; in external conformation. The helical transmembrane segment at 254-274 (FIIXLCILLLCLIFLLVLLDY) threads the bilayer. Residues 275–348 (QGMLPVCPLI…WASVRFSWLS (74 aa)) lie on the Virion surface side of the membrane. Residue Asn-320 is glycosylated (N-linked (GlcNAc...) asparagine; by host). A helical membrane pass occupies residues 349-369 (LLVPFVQWFVGLSPTVWLSVI). The Intravirion segment spans residues 370–375 (WMMWYW). The helical transmembrane segment at 376 to 398 (GPSLYNILSPFMPLLPIFFCLWV) threads the bilayer. Residues 399 to 400 (YI) are Virion surface-facing.

The protein belongs to the orthohepadnavirus major surface antigen family. Interacts (via its myristoylated pre-S1 region) with the host SLC10A1/NTCP; this interaction is essential for viral entry. In terms of assembly, in its internal form (Li-HBsAg), interacts with the capsid protein and with the isoform S. Interacts with host chaperone CANX. As to quaternary structure, associates with host chaperone CANX through its pre-S2 N glycan; this association may be essential for isoform M proper secretion. Interacts with isoform L. Interacts with the antigens of satellite virus HDV (HDVAgs); this interaction is required for encapsidation of HDV genomic RNA. In terms of processing, isoform M is N-terminally acetylated by host at a ratio of 90%, and N-glycosylated by host at the pre-S2 region. Myristoylated; this modification is essential for its interaction with the host protein SLC10A1/NTCP.

It is found in the virion membrane. Functionally, the large envelope protein exists in two topological conformations, one which is termed 'external' or Le-HBsAg and the other 'internal' or Li-HBsAg. In its external conformation the protein attaches the virus to cell receptors and thereby initiating infection. This interaction determines the species specificity and liver tropism. This attachment induces virion internalization predominantly through caveolin-mediated endocytosis. The large envelope protein also assures fusion between virion membrane and endosomal membrane. In its internal conformation the protein plays a role in virion morphogenesis and mediates the contact with the nucleocapsid like a matrix protein. The middle envelope protein plays an important role in the budding of the virion. It is involved in the induction of budding in a nucleocapsid independent way. In this process the majority of envelope proteins bud to form subviral lipoprotein particles of 22 nm of diameter that do not contain a nucleocapsid. This Hepatitis B virus genotype B1 (isolate Japan/Ry30/2002) (HBV-B) protein is Large envelope protein.